Reading from the N-terminus, the 1117-residue chain is RNA-directed RNA polymerase (1117 aa).

Residues 1 to 17 (MTVSGRSSWQNGKTTNA) are compositionally biased toward polar residues. A disordered region spans residues 1–23 (MTVSGRSSWQNGKTTNAMRAGKL).

It carries out the reaction RNA(n) + a ribonucleoside 5'-triphosphate = RNA(n+1) + diphosphate. RNA-dependent RNA polymerase which replicates the viral genome. This Penicillium chrysogenum (Penicillium notatum) protein is RNA-directed RNA polymerase (p1).